Consider the following 447-residue polypeptide: Na(+)-translocating NADH-quinone reductase subunit A (447 aa).

Belongs to the NqrA family. Composed of six subunits; NqrA, NqrB, NqrC, NqrD, NqrE and NqrF.

The catalysed reaction is a ubiquinone + n Na(+)(in) + NADH + H(+) = a ubiquinol + n Na(+)(out) + NAD(+). In terms of biological role, NQR complex catalyzes the reduction of ubiquinone-1 to ubiquinol by two successive reactions, coupled with the transport of Na(+) ions from the cytoplasm to the periplasm. NqrA to NqrE are probably involved in the second step, the conversion of ubisemiquinone to ubiquinol. The sequence is that of Na(+)-translocating NADH-quinone reductase subunit A from Tolumonas auensis (strain DSM 9187 / NBRC 110442 / TA 4).